The chain runs to 658 residues: Threonine--tRNA ligase (658 aa).

A TGS domain is found at 1–64; the sequence is MSFSISLSFP…EQSGQVEIIT (64 aa). The tract at residues 246-549 is catalytic; it reads DHRRLGREMD…LIENFAGHMP (304 aa). C343, H394, and H526 together coordinate Zn(2+).

This sequence belongs to the class-II aminoacyl-tRNA synthetase family. In terms of assembly, homodimer. Zn(2+) serves as cofactor.

Its subcellular location is the cytoplasm. It catalyses the reaction tRNA(Thr) + L-threonine + ATP = L-threonyl-tRNA(Thr) + AMP + diphosphate + H(+). Functionally, catalyzes the attachment of threonine to tRNA(Thr) in a two-step reaction: L-threonine is first activated by ATP to form Thr-AMP and then transferred to the acceptor end of tRNA(Thr). Also edits incorrectly charged L-seryl-tRNA(Thr). This Bartonella bacilliformis (strain ATCC 35685 / KC583 / Herrer 020/F12,63) protein is Threonine--tRNA ligase.